Here is a 449-residue protein sequence, read N- to C-terminus: Mannan endo-1,6-alpha-mannosidase DCW1 (449 aa).

Positions Met1–Ala21 are cleaved as a signal peptide. 12 N-linked (GlcNAc...) asparagine glycosylation sites follow: Asn34, Asn84, Asn109, Asn133, Asn203, Asn225, Asn240, Asn265, Asn281, Asn337, Asn362, and Asn420. The GPI-anchor amidated glycine moiety is linked to residue Gly428. The propeptide at Ala429–Phe449 is removed in mature form.

Belongs to the glycosyl hydrolase 76 family.

It localises to the cell membrane. The catalysed reaction is Random hydrolysis of (1-&gt;6)-alpha-D-mannosidic linkages in unbranched (1-&gt;6)-mannans.. Functionally, required for normal synthesis of the cell wall. The polypeptide is Mannan endo-1,6-alpha-mannosidase DCW1 (DCW1) (Saccharomyces cerevisiae (strain ATCC 204508 / S288c) (Baker's yeast)).